The primary structure comprises 518 residues: Glutamate--cysteine ligase (518 aa).

Belongs to the glutamate--cysteine ligase type 1 family. Type 1 subfamily.

It carries out the reaction L-cysteine + L-glutamate + ATP = gamma-L-glutamyl-L-cysteine + ADP + phosphate + H(+). The protein operates within sulfur metabolism; glutathione biosynthesis; glutathione from L-cysteine and L-glutamate: step 1/2. In Salmonella agona (strain SL483), this protein is Glutamate--cysteine ligase.